We begin with the raw amino-acid sequence, 504 residues long: Arabinose import ATP-binding protein AraG (504 aa).

ABC transporter domains lie at Leu-8–Arg-243 and Tyr-256–Val-499. Position 40-47 (Gly-40–Ser-47) interacts with ATP.

It belongs to the ABC transporter superfamily. Arabinose importer (TC 3.A.1.2.2) family. As to quaternary structure, the complex is composed of two ATP-binding proteins (AraG), two transmembrane proteins (AraH) and a solute-binding protein (AraF).

It localises to the cell inner membrane. The catalysed reaction is L-arabinose(out) + ATP + H2O = L-arabinose(in) + ADP + phosphate + H(+). Functionally, part of the ABC transporter complex AraFGH involved in arabinose import. Responsible for energy coupling to the transport system. The sequence is that of Arabinose import ATP-binding protein AraG from Escherichia coli O6:K15:H31 (strain 536 / UPEC).